A 65-amino-acid polypeptide reads, in one-letter code: Small ribosomal subunit protein bS21 (65 aa).

It belongs to the bacterial ribosomal protein bS21 family.

The protein is Small ribosomal subunit protein bS21 of Chlorobium chlorochromatii (strain CaD3).